Here is a 96-residue protein sequence, read N- to C-terminus: Putative pterin-4-alpha-carbinolamine dehydratase (96 aa).

Belongs to the pterin-4-alpha-carbinolamine dehydratase family.

The catalysed reaction is (4aS,6R)-4a-hydroxy-L-erythro-5,6,7,8-tetrahydrobiopterin = (6R)-L-erythro-6,7-dihydrobiopterin + H2O. The protein is Putative pterin-4-alpha-carbinolamine dehydratase of Prochlorococcus marinus (strain MIT 9301).